Reading from the N-terminus, the 477-residue chain is Succinate-semialdehyde dehydrogenase [NADP(+)] (477 aa).

NADP(+) is bound by residues 142–143, 166–169, and 218–219; these read WN, KHSE, and GS. Glu240 (proton acceptor) is an active-site residue. NADP(+) is bound at residue Leu241. The active-site Nucleophile is Cys274. Residue Glu371 participates in NADP(+) binding.

The protein belongs to the aldehyde dehydrogenase family.

It carries out the reaction succinate semialdehyde + NADP(+) + H2O = succinate + NADPH + 2 H(+). It participates in amino-acid degradation; 4-aminobutanoate degradation. Its function is as follows. Catalyzes the NADP(+) dependent oxidation of succinate semialdehyde to succinate. The chain is Succinate-semialdehyde dehydrogenase [NADP(+)] (ssdA) from Deinococcus radiodurans (strain ATCC 13939 / DSM 20539 / JCM 16871 / CCUG 27074 / LMG 4051 / NBRC 15346 / NCIMB 9279 / VKM B-1422 / R1).